Consider the following 293-residue polypeptide: 33 kDa chaperonin (293 aa).

Disulfide bonds link C238–C240 and C271–C274.

The protein belongs to the HSP33 family. Post-translationally, under oxidizing conditions two disulfide bonds are formed involving the reactive cysteines. Under reducing conditions zinc is bound to the reactive cysteines and the protein is inactive.

It is found in the cytoplasm. Its function is as follows. Redox regulated molecular chaperone. Protects both thermally unfolding and oxidatively damaged proteins from irreversible aggregation. Plays an important role in the bacterial defense system toward oxidative stress. The polypeptide is 33 kDa chaperonin (Clostridium beijerinckii (strain ATCC 51743 / NCIMB 8052) (Clostridium acetobutylicum)).